The primary structure comprises 364 residues: tRNA (adenine(58)-N(1))-methyltransferase catalytic subunit trm61 (364 aa).

S-adenosyl-L-methionine contacts are provided by residues 114–116 (SAS), Glu135, Arg140, 167–168 (DV), and Asp186. A disordered region spans residues 280–309 (EQNLSSDAKVEDQDNDSMLGENKSSVSTET).

The protein belongs to the class I-like SAM-binding methyltransferase superfamily. TRM61 family. Heterotetramer; composed of two copies of TRM6 and two copies of TRM61.

It localises to the nucleus. It catalyses the reaction adenosine(58) in tRNA + S-adenosyl-L-methionine = N(1)-methyladenosine(58) in tRNA + S-adenosyl-L-homocysteine + H(+). Catalytic subunit of tRNA (adenine-N(1)-)-methyltransferase, which catalyzes the formation of N(1)-methyladenine at position 58 (m1A58) in initiator methionyl-tRNA. In Schizosaccharomyces pombe (strain 972 / ATCC 24843) (Fission yeast), this protein is tRNA (adenine(58)-N(1))-methyltransferase catalytic subunit trm61 (cpd1).